The chain runs to 503 residues: Diels-Alderase cghA (503 aa).

The protein belongs to the Diels-Alderase family.

The catalysed reaction is (2S)-3-[(2S)-3,5-dioxo-4-[(2E,4R,6R,8E,10E,12E)-4,6,12-trimethyltetradeca-2,8,10,12-tetraenoyl]pyrrolidin-2-yl]-2-hydroxy-2-methylpropanoate = sch 210972. It functions in the pathway secondary metabolite biosynthesis. Its function is as follows. Diels-Alderase; part of the gene cluster that mediates the biosynthesis of the tetramic acid Sch210972, a potential anti-HIV fungal natural product that contains a decalin core. The PKS module of cghG together with the enoylreductase cghC catalyze the formation of the polyketide unit which is then conjugated to 4-hydroxyl-4-methyl glutamate (HMG) by the condensation domain of the cghG NRPS module. One unique structural feature of Sch210972 is the tetramic acid motif proposed to be derived from the non-proteinogenic amino acid HMG, by a Dieckmann-type condensation catalyzed by the reductase domain of cghG. The aldolase cghB catalyzes the aldol condensation of 2 molecules of pyruvic acid to yield the intermediate 4-hydroxyl-4-methyl-2-oxoglutarate (HMOG), which can then be stereoselectively transaminated by an unidentified enzyme to form HMG. The Diels-Alderase cghA then uses the Dieckmann product released by cghG as substrate and catalyzes the Diels-Alder cycloaddition to form the decalin ring of Sch210972. CghA also suppresses the nonenzymatic formation of the alternative stereoisomer. The chain is Diels-Alderase cghA from Chaetomium globosum (strain ATCC 6205 / CBS 148.51 / DSM 1962 / NBRC 6347 / NRRL 1970) (Soil fungus).